The sequence spans 461 residues: Cysteine--tRNA ligase (461 aa).

Cys28 contacts Zn(2+). Residues 30-40 carry the 'HIGH' region motif; sequence VTIYDLCHIGH. 3 residues coordinate Zn(2+): Cys209, His234, and Glu238. The short motif at 266-270 is the 'KMSKS' region element; it reads KMSKS. Lys269 lines the ATP pocket.

It belongs to the class-I aminoacyl-tRNA synthetase family. In terms of assembly, monomer. Requires Zn(2+) as cofactor.

The protein resides in the cytoplasm. It carries out the reaction tRNA(Cys) + L-cysteine + ATP = L-cysteinyl-tRNA(Cys) + AMP + diphosphate. This Vibrio atlanticus (strain LGP32) (Vibrio splendidus (strain Mel32)) protein is Cysteine--tRNA ligase.